Here is a 145-residue protein sequence, read N- to C-terminus: Large ribosomal subunit protein uL13 (145 aa).

This sequence belongs to the universal ribosomal protein uL13 family. As to quaternary structure, part of the 50S ribosomal subunit.

This protein is one of the early assembly proteins of the 50S ribosomal subunit, although it is not seen to bind rRNA by itself. It is important during the early stages of 50S assembly. The polypeptide is Large ribosomal subunit protein uL13 (Geobacillus kaustophilus (strain HTA426)).